A 270-amino-acid polypeptide reads, in one-letter code: Flavodoxin/ferredoxin--NADP reductase (270 aa).

Positions 12–113 (VLPDAQTVTS…PKPVGTLVID (102 aa)) constitute an FAD-binding FR-type domain. FAD-binding positions include 62–65 (RAYS), 78–80 (YSI), and 86–88 (PLT). An NADP(+)-binding site is contributed by Thr126. Thr128 provides a ligand contact to FAD. NADP(+)-binding positions include Arg156, 192 to 193 (TR), Arg201, and Asp238. 264–270 (AFVGEGI) contacts FAD.

It belongs to the ferredoxin--NADP reductase type 1 family. Monomer. FAD serves as cofactor.

Its subcellular location is the cytoplasm. The enzyme catalyses 2 reduced [2Fe-2S]-[ferredoxin] + NADP(+) + H(+) = 2 oxidized [2Fe-2S]-[ferredoxin] + NADPH. The catalysed reaction is reduced [flavodoxin] + NADP(+) = oxidized [flavodoxin] + NADPH + 2 H(+). In terms of biological role, transports electrons between flavodoxin or ferredoxin and NADPH. The chain is Flavodoxin/ferredoxin--NADP reductase from Rhodobacter capsulatus (Rhodopseudomonas capsulata).